Here is a 416-residue protein sequence, read N- to C-terminus: Exodeoxyribonuclease 7 large subunit (416 aa).

The segment at 1–21 is disordered; sequence MTEPDSKPKKGRAGRKKAEPV.

This sequence belongs to the XseA family. As to quaternary structure, heterooligomer composed of large and small subunits.

The protein resides in the cytoplasm. The catalysed reaction is Exonucleolytic cleavage in either 5'- to 3'- or 3'- to 5'-direction to yield nucleoside 5'-phosphates.. In terms of biological role, bidirectionally degrades single-stranded DNA into large acid-insoluble oligonucleotides, which are then degraded further into small acid-soluble oligonucleotides. The chain is Exodeoxyribonuclease 7 large subunit from Deinococcus radiodurans (strain ATCC 13939 / DSM 20539 / JCM 16871 / CCUG 27074 / LMG 4051 / NBRC 15346 / NCIMB 9279 / VKM B-1422 / R1).